The following is a 736-amino-acid chain: MAAVFDDIRLEDIPVDDVDMQDLEETYAVERSIEFDRYVVVDGAPVAPEAKVGALQKVLTKLFSQAGSVVDMDVPVEEGRTKGHLFIEFEDAGAARRAIKMFNGKKLDVKHRLWVNGLDDMERYGRPDFSTEYREPVVPEFEATEYPRSWLQDETGRDQFVLQKGEMTAVFWNRNNLQPENVVEPRRNWSNSILNFSPHGTYLFSFHDQGIASWGGPQFKRLRRFAHPDVKAISMSSTEKYLVTFSSEPLEVSDEPNEACPFGPESRGHQLCIWDVATGVCVKTFALPPQQQLQWPMVKWSFDDKFCARLGPGAIAVYETEKNFQLLGGKVMKIEDVQDFSFAPKGIKLASNRPNDPPSTVMVYWTPESNNQSCKAVLIELPNRRVLRTINLVQVTDVSFHWQNQAEFLCVQVDRHTKSRKTIFTNMEICSLTAREFPFEKVEIKDRCMRFAWEPNSDRFVIISRSENVNDNPAIAKNVVSFYAPEKKVDKKGVIIDKELSIFKKWKLVRAIDGKFSNEITWSPAGRFVCVAAIGKIGSRNENIDFYDMDYPNTEKIINTATDVNATLRDVAHINYASATDYEWDPSGRYLAFWSSAWKHKAENGYKVFNLAGAIVREELITDFNNFFWRPRPDSLLSNSEKKKVRKNLKEWSAHFEEQDAMEADSATRELILKRRNWLDEWSKYREACKQTLSESGLSICDCVELSTKDEDCELVEEIRETVVEESTEEVPFFEE.

The segment at 1–94 (MAAVFDDIRL…LFIEFEDAGA (94 aa)) is sufficient for interaction with HCR1 and TIF32. The segment at 1-219 (MAAVFDDIRL…GIASWGGPQF (219 aa)) is sufficient for interaction with PIC8. Residues 37 to 120 (RYVVVDGAPV…HRLWVNGLDD (84 aa)) form the RRM domain. WD repeat units lie at residues 140–182 (EFEA…PENV), 186–224 (RRNWSNSILNFSPHGTYLFSFHDQGIASWGGPQFKRLRR), 226–244 (AHPDVKAISMSSTEKYLVT), 245–284 (FSSEPLEVSDEPNEACPFGPESRGHQLCIWDVATGVCVKT), 288–328 (PPQQ…QLLG), 332–375 (MKIE…QSCK), 443–483 (EIKD…VSFY), 511–557 (AIDG…TEKI), 566–604 (ATLRDVAHINYASATDYEWDPSGRYLAFWSSAWKHKAEN), and 616–662 (VREE…QDAM).

The protein belongs to the eIF-3 subunit B family. As to quaternary structure, component of the eukaryotic translation initiation factor 3 (eIF-3) complex.

It localises to the cytoplasm. RNA-binding component of the eukaryotic translation initiation factor 3 (eIF-3) complex, which is involved in protein synthesis of a specialized repertoire of mRNAs and, together with other initiation factors, stimulates binding of mRNA and methionyl-tRNAi to the 40S ribosome. The eIF-3 complex specifically targets and initiates translation of a subset of mRNAs involved in cell proliferation. The chain is Eukaryotic translation initiation factor 3 subunit B from Eremothecium gossypii (strain ATCC 10895 / CBS 109.51 / FGSC 9923 / NRRL Y-1056) (Yeast).